We begin with the raw amino-acid sequence, 180 residues long: Inner membrane-spanning protein YciB (180 aa).

A run of 5 helical transmembrane segments spans residues 25–45 (QNATLYMLITSVICITLCYII), 49–69 (VSKLSIISTTVLLVSGSITLI), 76–96 (IKIKPTILYVIFGIIFLMSGI), 118–138 (ITLSYRTAAFFFFMAVVNEIV), and 150–170 (FKVFGIIPITFIFIVLQLPLL).

It belongs to the YciB family.

Its subcellular location is the cell inner membrane. Its function is as follows. Plays a role in cell envelope biogenesis, maintenance of cell envelope integrity and membrane homeostasis. This is Inner membrane-spanning protein YciB from Rickettsia akari (strain Hartford).